The sequence spans 102 residues: NADH-quinone oxidoreductase subunit K (102 aa).

3 helical membrane passes run 6 to 26 (LTGF…GVLA), 30 to 50 (ILFQ…AFIA), and 63 to 83 (MFVL…ALFL).

This sequence belongs to the complex I subunit 4L family. As to quaternary structure, NDH-1 is composed of 14 different subunits. Subunits NuoA, H, J, K, L, M, N constitute the membrane sector of the complex.

It is found in the cell inner membrane. The enzyme catalyses a quinone + NADH + 5 H(+)(in) = a quinol + NAD(+) + 4 H(+)(out). Functionally, NDH-1 shuttles electrons from NADH, via FMN and iron-sulfur (Fe-S) centers, to quinones in the respiratory chain. The immediate electron acceptor for the enzyme in this species is believed to be ubiquinone. Couples the redox reaction to proton translocation (for every two electrons transferred, four hydrogen ions are translocated across the cytoplasmic membrane), and thus conserves the redox energy in a proton gradient. The sequence is that of NADH-quinone oxidoreductase subunit K from Rhodopseudomonas palustris (strain BisA53).